A 206-amino-acid chain; its full sequence is Outer-membrane lipoprotein carrier protein (206 aa).

An N-terminal signal peptide occupies residues 1–20; it reads MRLIRMLLPVLALTTLTAHA.

The protein belongs to the LolA family. As to quaternary structure, monomer.

Its subcellular location is the periplasm. Its function is as follows. Participates in the translocation of lipoproteins from the inner membrane to the outer membrane. Only forms a complex with a lipoprotein if the residue after the N-terminal Cys is not an aspartate (The Asp acts as a targeting signal to indicate that the lipoprotein should stay in the inner membrane). The polypeptide is Outer-membrane lipoprotein carrier protein (Pseudomonas fluorescens (strain Pf0-1)).